Here is a 551-residue protein sequence, read N- to C-terminus: Dol-P-Man:Man(7)GlcNAc(2)-PP-Dol alpha-1,6-mannosyltransferase (551 aa).

At M1–R2 the chain is on the lumenal side. A helical transmembrane segment spans residues W3–F23. The Cytoplasmic portion of the chain corresponds to T24–T61. A helical membrane pass occupies residues F62 to I82. The Lumenal segment spans residues Q83–S89. The helical transmembrane segment at I90–Y110 threads the bilayer. Residues L111–Y136 are Cytoplasmic-facing. The helical transmembrane segment at I137–F157 threads the bilayer. At Y158–G178 the chain is on the lumenal side. Residues W179–F199 traverse the membrane as a helical segment. The Cytoplasmic segment spans residues R200–E202. The helical transmembrane segment at V203–F223 threads the bilayer. Residues D224–K227 are Lumenal-facing. A helical transmembrane segment spans residues F228–W248. The Cytoplasmic portion of the chain corresponds to Q249–P275. A helical transmembrane segment spans residues V276–L296. Residues N297–L303 are Lumenal-facing. The helical transmembrane segment at A304–F324 threads the bilayer. Residues Q325–R331 are Cytoplasmic-facing. Residues F332–W352 form a helical membrane-spanning segment. Over E353 to C365 the chain is Lumenal. The helical transmembrane segment at L366 to I386 threads the bilayer. The Cytoplasmic portion of the chain corresponds to S387–S417. Residues I418 to I438 traverse the membrane as a helical segment. The Lumenal portion of the chain corresponds to N439 to D551.

The protein belongs to the glycosyltransferase 22 family.

It is found in the endoplasmic reticulum membrane. The enzyme catalyses an alpha-D-Man-(1-&gt;2)-alpha-D-Man-(1-&gt;2)-alpha-D-Man-(1-&gt;3)-[alpha-D-Man-(1-&gt;2)-alpha-D-Man-(1-&gt;3)-alpha-D-Man-(1-&gt;6)]-beta-D-Man-(1-&gt;4)-beta-D-GlcNAc-(1-&gt;4)-alpha-D-GlcNAc-diphospho-di-trans,poly-cis-dolichol + a di-trans,poly-cis-dolichyl beta-D-mannosyl phosphate = an alpha-D-Man-(1-&gt;2)-alpha-D-Man-(1-&gt;2)-alpha-D-Man-(1-&gt;3)-[alpha-D-Man-(1-&gt;2)-alpha-D-Man-(1-&gt;3)-[alpha-D-Man-(1-&gt;6)]-alpha-D-Man-(1-&gt;6)]-beta-D-Man-(1-&gt;4)-beta-D-GlcNAc-(1-&gt;4)-alpha-D-GlcNAc-diphospho-di-trans,poly-cis-dolichol + a di-trans,poly-cis-dolichyl phosphate + H(+). Its pathway is protein modification; protein glycosylation. In terms of biological role, mannosyltransferase that operates in the biosynthetic pathway of dolichol-linked oligosaccharides, the glycan precursors employed in protein asparagine (N)-glycosylation. The assembly of dolichol-linked oligosaccharides begins on the cytosolic side of the endoplasmic reticulum membrane and finishes in its lumen. The sequential addition of sugars to dolichol pyrophosphate produces dolichol-linked oligosaccharides containing fourteen sugars, including two GlcNAcs, nine mannoses and three glucoses. Once assembled, the oligosaccharide is transferred from the lipid to nascent proteins by oligosaccharyltransferases. In the lumen of the endoplasmic reticulum, adds the eighth mannose residue in an alpha-1,6 linkage onto Man(7)GlcNAc(2)-PP-dolichol to produce Man(8)GlcNAc(2)-PP-dolichol. The polypeptide is Dol-P-Man:Man(7)GlcNAc(2)-PP-Dol alpha-1,6-mannosyltransferase (ALG12) (Saccharomyces cerevisiae (strain ATCC 204508 / S288c) (Baker's yeast)).